The sequence spans 415 residues: Styrene monooxygenase StyA (415 aa).

Belongs to the StyA family. In terms of assembly, homodimer. A direct interaction with the monooxygenase reductase component StyB seems not to be necessary for the enzymatic activity.

The catalysed reaction is styrene + FADH2 + O2 = (S)-styrene oxide + FAD + H2O + H(+). It participates in aromatic compound metabolism. Functionally, styrene monooxygenase which catalyzes the first step in the aerobic styrene degradation pathway by enantioselective epoxidation of the vinyl side chain. In a two-component system, a reductase utilizes NADH to reduce FAD, which is then transferred to the oxygenase; the electron transfer is proposed to occur via a diffusing flavin. This chain is Styrene monooxygenase StyA (styA), found in Pseudomonas sp.